The sequence spans 290 residues: Small ribosomal subunit biogenesis GTPase RsgA (290 aa).

Residues 62–213 (KNSLVRPPIV…IADTPGFSSL (152 aa)) form the CP-type G domain. GTP is bound by residues 111–114 (SKLD) and 156–164 (GQTGVGKST). The Zn(2+) site is built by Cys237, Cys242, His244, and Cys250.

The protein belongs to the TRAFAC class YlqF/YawG GTPase family. RsgA subfamily. In terms of assembly, monomer. Associates with 30S ribosomal subunit, binds 16S rRNA. The cofactor is Zn(2+).

It localises to the cytoplasm. Functionally, one of several proteins that assist in the late maturation steps of the functional core of the 30S ribosomal subunit. Helps release RbfA from mature subunits. May play a role in the assembly of ribosomal proteins into the subunit. Circularly permuted GTPase that catalyzes slow GTP hydrolysis, GTPase activity is stimulated by the 30S ribosomal subunit. The sequence is that of Small ribosomal subunit biogenesis GTPase RsgA from Streptococcus agalactiae serotype V (strain ATCC BAA-611 / 2603 V/R).